The following is a 587-amino-acid chain: Aspartate--tRNA ligase (587 aa).

E174 contacts L-aspartate. Residues 198 to 201 are aspartate; it reads QITK. An L-aspartate-binding site is contributed by R220. ATP contacts are provided by residues 220-222 and Q229; that span reads RDE. H443 provides a ligand contact to L-aspartate. E477 contributes to the ATP binding site. R484 contacts L-aspartate. Residue 529 to 532 participates in ATP binding; it reads GLDR.

This sequence belongs to the class-II aminoacyl-tRNA synthetase family. Type 1 subfamily. In terms of assembly, homodimer.

Its subcellular location is the cytoplasm. It catalyses the reaction tRNA(Asp) + L-aspartate + ATP = L-aspartyl-tRNA(Asp) + AMP + diphosphate. In terms of biological role, catalyzes the attachment of L-aspartate to tRNA(Asp) in a two-step reaction: L-aspartate is first activated by ATP to form Asp-AMP and then transferred to the acceptor end of tRNA(Asp). In Streptococcus pneumoniae (strain ATCC 700669 / Spain 23F-1), this protein is Aspartate--tRNA ligase.